Here is a 319-residue protein sequence, read N- to C-terminus: Probable murein peptide carboxypeptidase (319 aa).

S116 acts as the Nucleophile in catalysis. Active-site charge relay system residues include E214 and H284.

This sequence belongs to the peptidase S66 family.

It localises to the cytoplasm. Its pathway is cell wall degradation; peptidoglycan degradation. In terms of biological role, may be involved in the degradation of peptidoglycan by catalyzing the cleavage of the terminal D-alanine residue from cytoplasmic murein peptides. This chain is Probable murein peptide carboxypeptidase (ykfA), found in Bacillus subtilis (strain 168).